Here is a 156-residue protein sequence, read N- to C-terminus: 6,7-dimethyl-8-ribityllumazine synthase (156 aa).

Residues F23, 57–59, and 81–83 each bind 5-amino-6-(D-ribitylamino)uracil; these read AFE and TVI. Residue 86 to 87 participates in (2S)-2-hydroxy-3-oxobutyl phosphate binding; the sequence is ST. Catalysis depends on H89, which acts as the Proton donor. Residue F114 coordinates 5-amino-6-(D-ribitylamino)uracil. R128 contacts (2S)-2-hydroxy-3-oxobutyl phosphate.

The protein belongs to the DMRL synthase family. Forms an icosahedral capsid composed of 60 subunits, arranged as a dodecamer of pentamers.

The enzyme catalyses (2S)-2-hydroxy-3-oxobutyl phosphate + 5-amino-6-(D-ribitylamino)uracil = 6,7-dimethyl-8-(1-D-ribityl)lumazine + phosphate + 2 H2O + H(+). The protein operates within cofactor biosynthesis; riboflavin biosynthesis; riboflavin from 2-hydroxy-3-oxobutyl phosphate and 5-amino-6-(D-ribitylamino)uracil: step 1/2. In terms of biological role, catalyzes the formation of 6,7-dimethyl-8-ribityllumazine by condensation of 5-amino-6-(D-ribitylamino)uracil with 3,4-dihydroxy-2-butanone 4-phosphate. This is the penultimate step in the biosynthesis of riboflavin. This is 6,7-dimethyl-8-ribityllumazine synthase from Halalkalibacterium halodurans (strain ATCC BAA-125 / DSM 18197 / FERM 7344 / JCM 9153 / C-125) (Bacillus halodurans).